A 460-amino-acid chain; its full sequence is Cyclin-A1-1 (460 aa).

Disordered regions lie at residues 1 to 52 and 95 to 126; these read MSNI…ITNQ and PHKV…KSPQ. Low complexity-rich tracts occupy residues 10–19 and 100–111; these read SSFSSSTKSS and SSPSKSDDGSVS.

This sequence belongs to the cyclin family. Cyclin AB subfamily. In terms of assembly, interacts with FZR2/CCS52A1, FZR1/CCS52A2 and FZR3/CCS52B.

This chain is Cyclin-A1-1 (CYCA1-1), found in Arabidopsis thaliana (Mouse-ear cress).